The following is a 263-amino-acid chain: Leukocyte-associated immunoglobulin-like receptor 1 (263 aa).

The first 21 residues, 1 to 21 (MSLHPVILLVLVLCLGWKINT), serve as a signal peptide directing secretion. Topologically, residues 22–144 (QEGSLPDITI…TSWLKTYSIY (123 aa)) are extracellular. An Ig-like C2-type domain is found at 27 to 115 (PDITIFPNSS…TWSERSKTLE (89 aa)). Asparagine 34 and asparagine 90 each carry an N-linked (GlcNAc...) asparagine glycan. Cysteine 49 and cysteine 99 are disulfide-bonded. A helical transmembrane segment spans residues 145-165 (IFTVVSVIFLLCLSALLFCFL). Topologically, residues 166–263 (RHRQKKQGLP…SSTYAAIIRH (98 aa)) are cytoplasmic. Short sequence motifs (ITIM motif) lie at residues 226–231 (VTYIQL) and 255–260 (STYAAI). A phosphotyrosine mark is found at tyrosine 228 and tyrosine 257.

As to quaternary structure, interacts with SH2 domains of tyrosine-protein phosphatases PTPN6 and PTPN11. The interaction with PTPN6 is constitutive. Interacts with the SH2 domain of CSK. Binds with high affinity to extracellular matrix collagens, the interaction is functionally important. In terms of processing, phosphorylation at Tyr-228 and Tyr-257 activates it. May be phosphorylated by LCK. N-glycosylated. In terms of tissue distribution, expressed in lymphoid organs and in cell lines of hemopoietic origin.

It localises to the cell membrane. Functionally, functions as an inhibitory receptor that plays a constitutive negative regulatory role on cytolytic function of natural killer (NK) cells, B-cells and T-cells. Activation by Tyr phosphorylation results in recruitment and activation of the phosphatases PTPN6 and PTPN11. It also reduces the increase of intracellular calcium evoked by B-cell receptor ligation. May also play its inhibitory role independently of SH2-containing phosphatases. Modulates cytokine production in CD4+ T-cells, down-regulating IL2 and IFNG production while inducing secretion of transforming growth factor beta. Also down-regulates IgG and IgE production in B-cells as well as IL8, IL10 and TNF secretion. Inhibits proliferation and induces apoptosis in myeloid leukemia cell lines as well as prevents nuclear translocation of NF-kappa-B p65 subunit/RELA and phosphorylation of I-kappa-B alpha/CHUK in these cells. Inhibits the differentiation of peripheral blood precursors towards dendritic cells. This is Leukocyte-associated immunoglobulin-like receptor 1 (Lair1) from Mus musculus (Mouse).